A 135-amino-acid chain; its full sequence is Interleukin-4 (135 aa).

The N-terminal stretch at M1–G24 is a signal peptide. Intrachain disulfides connect C48–C85 and C70–C105. Residues N62 and N96 are each glycosylated (N-linked (GlcNAc...) asparagine).

Belongs to the IL-4/IL-13 family.

It is found in the secreted. Its function is as follows. Participates in at least several B-cell activation processes as well as of other cell types. It is a costimulator of DNA-synthesis. It induces the expression of class II MHC molecules on resting B-cells. It enhances both secretion and cell surface expression of IgE and IgG1. It also regulates the expression of the low affinity Fc receptor for IgE (CD23) on both lymphocytes and monocytes. Positively regulates IL31RA expression in macrophages. Stimulates autophagy in dendritic cells by interfering with mTORC1 signaling and through the induction of RUFY4. This is Interleukin-4 (IL4) from Ovis aries (Sheep).